Consider the following 564-residue polypeptide: Multidrug resistance protein 1 (564 aa).

Topologically, residues 1–115 (MHYRFLRDSF…NPQNWPTLQK (115 aa)) are cytoplasmic. The disordered stretch occupies residues 60–101 (IDNQGEPNSSQSSSSNNTIVDNNNNNDNDVDGDKIVVTWDGD). The span at 67–86 (NSSQSSSSNNTIVDNNNNND) shows a compositional bias: low complexity. A helical membrane pass occupies residues 116–136 (AFFIFQISFLTTSVYMGSAVY). Residues 137 to 151 (TPGIEELMHDFGIGR) are Extracellular-facing. Residues 152-172 (VVATLPLTLFVIGYGVGPLVF) form a helical membrane-spanning segment. Residues 173 to 183 (SPMSENAIFGR) are Cytoplasmic-facing. A helical transmembrane segment spans residues 184 to 204 (TSIYIITLFLFVILQIPTALV). The Extracellular portion of the chain corresponds to 205-206 (NN). A helical membrane pass occupies residues 207 to 227 (IAGLCILRFLGGFFASPCLAT). The Cytoplasmic segment spans residues 228–242 (GGASVADVVKFWNLP). The chain crosses the membrane as a helical span at residues 243–263 (VGLAAWSLGAVCGPSFGPFFG). Topologically, residues 264–273 (SILTVKASWR) are extracellular. A helical membrane pass occupies residues 274–294 (WTFWFMCIISGFSFVMLCFTL). Residues 295–350 (PETFGKTLLYRKAKRLRAITGNDRITSEGEVENSKMTSHELIIDTLWRPLEITVME) lie on the Cytoplasmic side of the membrane. A helical transmembrane segment spans residues 351–371 (PVVLLINIYIAMVYSILYLFF). The Extracellular portion of the chain corresponds to 372–390 (EVFPIYFVGVKHFTLVELG). The chain crosses the membrane as a helical span at residues 391 to 411 (TTYMSIVIGIVIAAFIYIPVI). Over 412–428 (RQKFTKPILRQEQVFPE) the chain is Cytoplasmic. A helical membrane pass occupies residues 429–449 (VFIPIAIVGGILLTSGLFIFG). The Extracellular portion of the chain corresponds to 450–455 (WSANRT). Asparagine 453 carries N-linked (GlcNAc...) asparagine glycosylation. A helical transmembrane segment spans residues 456–476 (THWVGPLFGAATTASGAFLIF). Residues 477–503 (QTLFNFMGASFKPHYIASVFASNDLFR) lie on the Cytoplasmic side of the membrane. The helical transmembrane segment at 504 to 524 (SVIASVFPLFGAPLFDNLATP) threads the bilayer. Over 525 to 528 (EYPV) the chain is Extracellular. A helical transmembrane segment spans residues 529–549 (AWGSSVLGFITLVMIAIPVLF). Over 550 to 564 (YLNGPKLRARSKYAN) the chain is Cytoplasmic.

It belongs to the major facilitator superfamily. CAR1 family.

The protein resides in the cell membrane. Its function is as follows. Plasma membrane multidrug efflux pump that confers resistance to numerous chemicals including azoles such as fluconazole, voriconazole, and benztriazoles, as well as to benomyl, cycloheximide, methotrexate, 4-nitroquinoline-N-oxide, sulfometuron methyl, cerulenin, and brefeldin A. The protein is Multidrug resistance protein 1 of Candida albicans (strain SC5314 / ATCC MYA-2876) (Yeast).